The sequence spans 215 residues: Cytochrome b6 (215 aa).

Residues 32 to 52 (IFYCLGGITLTCFLVQVATGF) traverse the membrane as a helical segment. A heme c-binding site is contributed by Cys35. His86 and His100 together coordinate heme b. A run of 3 helical transmembrane segments spans residues 90 to 110 (ASMM…TGGF), 116 to 136 (LTWV…VTGY), and 186 to 206 (LHTF…FLMI). Heme b is bound by residues His187 and His202.

It belongs to the cytochrome b family. PetB subfamily. As to quaternary structure, the 4 large subunits of the cytochrome b6-f complex are cytochrome b6, subunit IV (17 kDa polypeptide, PetD), cytochrome f and the Rieske protein, while the 4 small subunits are PetG, PetL, PetM and PetN. The complex functions as a dimer. It depends on heme b as a cofactor. Requires heme c as cofactor.

The protein resides in the plastid. Its subcellular location is the chloroplast thylakoid membrane. Its function is as follows. Component of the cytochrome b6-f complex, which mediates electron transfer between photosystem II (PSII) and photosystem I (PSI), cyclic electron flow around PSI, and state transitions. This chain is Cytochrome b6, found in Gossypium barbadense (Sea Island cotton).